The following is a 199-amino-acid chain: MEFSFPLPGNPIFDYVLLPCFIFLSRVTDVSIGTIRVILLTREKKGIAASLGFLEVLLWVVVITQVIKNLNNVFCYLAYAGGFATGTFIGMILEEKLAIGFSLLRIISPQNGSEIADKLSEAGYRVTIMNGHGSRGPVKIVFTVLKRKKIDQAMKIVQNVEPDVFYSIENARRTNTTTFEDSPGLLRRGILEKILKIRK.

2 helical membrane-spanning segments follow: residues 47–67 (IAAS…TQVI) and 73–93 (VFCY…GMIL).

It belongs to the UPF0316 family.

The protein resides in the cell membrane. This is UPF0316 protein LA_0606 from Leptospira interrogans serogroup Icterohaemorrhagiae serovar Lai (strain 56601).